The chain runs to 332 residues: Clavesin-1 (332 aa).

The region spanning 96 to 257 (IKRALMDGFP…EFGGTLPPYD (162 aa)) is the CRAL-TRIO domain. Residues 300 to 332 (KYMKRSHSVVEPGTLRHEEERENENTQPLLALD) are disordered. Over residues 313–323 (TLRHEEERENE) the composition is skewed to basic and acidic residues.

The protein localises to the golgi apparatus. The protein resides in the trans-Golgi network membrane. It localises to the early endosome membrane. Its subcellular location is the cytoplasmic vesicle. It is found in the clathrin-coated vesicle. Its function is as follows. Required for normal morphology of late endosomes and/or lysosomes in neurons. Binds phosphatidylinositol 3,5-bisphosphate (PtdIns(3,5)P2). In Xenopus laevis (African clawed frog), this protein is Clavesin-1 (clvs1).